A 706-amino-acid chain; its full sequence is Envelope glycoprotein H (706 aa).

The signal sequence occupies residues 1-18 (MQLLCVFCLVLLWEVGAA). At 19–682 (SLSEVKLHLD…LYEERAHVVL (664 aa)) the chain is on the virion surface side. N60 carries N-linked (GlcNAc...) asparagine; by host glycosylation. The tract at residues 165-229 (DKFQYTGAMT…QSGDYSLVIV (65 aa)) is interaction with gL. C278 and C335 are joined by a disulfide. A glycan (N-linked (GlcNAc...) asparagine; by host) is linked at N435. Disulfide bonds link C454–C478 and C534–C587. N549 and N604 each carry an N-linked (GlcNAc...) asparagine; by host glycan. C612 and C615 are joined by a disulfide. N-linked (GlcNAc...) asparagine; by host glycosylation is present at N664. Residues 683–703 (AIILYFIAFALGIFLVHKIVM) form a helical membrane-spanning segment. Residues 704–706 (FFL) lie on the Intravirion side of the membrane.

It belongs to the herpesviridae glycoprotein H family. Interacts with glycoprotein L (gL); this interaction is necessary for the correct processing and cell surface expression of gH. The heterodimer gH/gL seems to interact with gB trimers during fusion. The heterodimer gH/gL interacts with host EPHA2 to facilitate virus internalization and fusion. Interacts with glycoprotein 42/BZLF2. In terms of processing, N-glycosylated, O-glycosylated, and sialylated.

Its subcellular location is the virion membrane. The protein resides in the host cell membrane. It is found in the host endosome membrane. The heterodimer glycoprotein H-glycoprotein L is required for the fusion of viral and plasma membranes leading to virus entry into the host cell. Following initial binding to host receptor, membrane fusion is mediated by the fusion machinery composed of gB and the heterodimer gH/gL. May also be involved in the fusion between the virion envelope and the outer nuclear membrane during virion morphogenesis. The heterodimer gH/gL targets also host EPHA2 to promote viral entry. The polypeptide is Envelope glycoprotein H (Homo sapiens (Human)).